The primary structure comprises 238 residues: Ribonuclease PH (238 aa).

Phosphate-binding positions include Arg86 and 124–126; that span reads GTR.

Belongs to the RNase PH family. In terms of assembly, homohexameric ring arranged as a trimer of dimers.

The catalysed reaction is tRNA(n+1) + phosphate = tRNA(n) + a ribonucleoside 5'-diphosphate. Functionally, phosphorolytic 3'-5' exoribonuclease that plays an important role in tRNA 3'-end maturation. Removes nucleotide residues following the 3'-CCA terminus of tRNAs; can also add nucleotides to the ends of RNA molecules by using nucleoside diphosphates as substrates, but this may not be physiologically important. Probably plays a role in initiation of 16S rRNA degradation (leading to ribosome degradation) during starvation. The protein is Ribonuclease PH of Mesorhizobium japonicum (strain LMG 29417 / CECT 9101 / MAFF 303099) (Mesorhizobium loti (strain MAFF 303099)).